The sequence spans 157 residues: 2-C-methyl-D-erythritol 2,4-cyclodiphosphate synthase (157 aa).

A divalent metal cation-binding residues include Asp-8 and His-10. Residues 8–10 (DVH) and 34–35 (HS) contribute to the 4-CDP-2-C-methyl-D-erythritol 2-phosphate site. His-42 provides a ligand contact to a divalent metal cation. Residues 56–58 (DIG), 61–65 (FPDTD), 100–106 (AQAPKMA), 132–135 (TTTE), Phe-139, and Arg-142 each bind 4-CDP-2-C-methyl-D-erythritol 2-phosphate.

It belongs to the IspF family. As to quaternary structure, homotrimer. Requires a divalent metal cation as cofactor.

The catalysed reaction is 4-CDP-2-C-methyl-D-erythritol 2-phosphate = 2-C-methyl-D-erythritol 2,4-cyclic diphosphate + CMP. Its pathway is isoprenoid biosynthesis; isopentenyl diphosphate biosynthesis via DXP pathway; isopentenyl diphosphate from 1-deoxy-D-xylulose 5-phosphate: step 4/6. Involved in the biosynthesis of isopentenyl diphosphate (IPP) and dimethylallyl diphosphate (DMAPP), two major building blocks of isoprenoid compounds. Catalyzes the conversion of 4-diphosphocytidyl-2-C-methyl-D-erythritol 2-phosphate (CDP-ME2P) to 2-C-methyl-D-erythritol 2,4-cyclodiphosphate (ME-CPP) with a corresponding release of cytidine 5-monophosphate (CMP). The chain is 2-C-methyl-D-erythritol 2,4-cyclodiphosphate synthase from Pseudomonas syringae pv. syringae (strain B728a).